Reading from the N-terminus, the 413-residue chain is Aspartate aminotransferase, cytoplasmic (413 aa).

L-aspartate is bound by residues G39 and W141. Position 149 is a phosphoserine (S149). N195 contributes to the L-aspartate binding site. K259 is modified (N6-(pyridoxal phosphate)lysine). R387 serves as a coordination point for L-aspartate.

This sequence belongs to the class-I pyridoxal-phosphate-dependent aminotransferase family. As to quaternary structure, homodimer. Pyridoxal 5'-phosphate serves as cofactor.

Its subcellular location is the cytoplasm. The enzyme catalyses L-aspartate + 2-oxoglutarate = oxaloacetate + L-glutamate. The catalysed reaction is L-cysteine + 2-oxoglutarate = 2-oxo-3-sulfanylpropanoate + L-glutamate. It catalyses the reaction (2S)-2-aminobutanoate + 2-oxoglutarate = 2-oxobutanoate + L-glutamate. It carries out the reaction 3-sulfino-L-alanine + 2-oxoglutarate = 3-sulfinopyruvate + L-glutamate. Functionally, biosynthesis of L-glutamate from L-aspartate or L-cysteine. Important regulator of levels of glutamate, the major excitatory neurotransmitter of the vertebrate central nervous system. Acts as a scavenger of glutamate in brain neuroprotection. The aspartate aminotransferase activity is involved in hepatic glucose synthesis during development and in adipocyte glyceroneogenesis. Using L-cysteine as substrate, regulates levels of mercaptopyruvate, an important source of hydrogen sulfide. Mercaptopyruvate is converted into H(2)S via the action of 3-mercaptopyruvate sulfurtransferase (3MST). Hydrogen sulfide is an important synaptic modulator and neuroprotectant in the brain. This chain is Aspartate aminotransferase, cytoplasmic, found in Pongo abelii (Sumatran orangutan).